A 517-amino-acid polypeptide reads, in one-letter code: Sterol 14-alpha demethylase CYP51C (517 aa).

The chain crosses the membrane as a helical span at residues 10–30; sequence TLPLSVSIPLTTSIIIILSIV. Lanosterol is bound at residue Tyr115. An itraconazole-binding site is contributed by Gly300. Cys458 lines the heme pocket.

Belongs to the cytochrome P450 family. It depends on heme as a cofactor.

The protein resides in the endoplasmic reticulum membrane. Its pathway is steroid metabolism; ergosterol biosynthesis. Together with cyp51A and cyp51B, encodes the sterol 14alpha-demethylase that plays a critical role in the third module of ergosterol biosynthesis pathway, being ergosterol the major sterol component in fungal membranes that participates in a variety of functions. Cyp51C does not seem to encode an active sterol 14-alpha-demethylase, but can impact indirectly on sterol 14alpha-demethylation, and is required for full virulence on host wheat ears, but not on Arabidopsis floral tissue or the fruits of apple and tomato. The third module or late pathway involves the ergosterol synthesis itself through consecutive reactions that mainly occur in the endoplasmic reticulum (ER) membrane. In filamentous fungi, during the initial step of this module, lanosterol (lanosta-8,24-dien-3beta-ol) can be metabolized to eburicol. Sterol 14alpha-demethylase catalyzes the three-step oxidative removal of the 14alpha-methyl group (C-32) of both these sterols in the form of formate, and converts eburicol and lanosterol to 14-demethyleburicol (4,4,24-trimethylergosta-8,14,24(28)-trienol) and 4,4-dimethyl-5alpha-cholesta-8,14,24-trien-3beta-ol, respectively, which are further metabolized by other enzymes in the pathway to ergosterol. The sequence is that of Sterol 14-alpha demethylase CYP51C from Gibberella zeae (strain ATCC MYA-4620 / CBS 123657 / FGSC 9075 / NRRL 31084 / PH-1) (Wheat head blight fungus).